The primary structure comprises 190 residues: Elongation factor P-like protein (190 aa).

It belongs to the elongation factor P family.

The chain is Elongation factor P-like protein from Salmonella gallinarum (strain 287/91 / NCTC 13346).